The chain runs to 347 residues: NADH-ubiquinone oxidoreductase chain 2 (347 aa).

10 consecutive transmembrane segments (helical) span residues 1–21, 25–45, 59–79, 111–131, 149–169, 178–198, 201–221, 237–257, 274–294, and 326–346; these read MNPLVFTMIMSTVMLGTAIVA, HWLMAWIGFEMNMLAVIPILM, YFLTQATASMLLMLAVTMNLV, FHFWVPEVTQGISLPSGLILL, INLDLLMMLINLSIAIGGWGG, IMAYSSIAHMGWMTAILTYNP, TLLNLMIYILLTTTTFMMFML, MPLLTTAILLTMLSLGGLPPL, NSVIMPTTMAVMALLNLYFYM, and LSPLIILSTLILPLSPMLALL.

This sequence belongs to the complex I subunit 2 family. Core subunit of respiratory chain NADH dehydrogenase (Complex I) which is composed of 45 different subunits. Interacts with TMEM242.

Its subcellular location is the mitochondrion inner membrane. The catalysed reaction is a ubiquinone + NADH + 5 H(+)(in) = a ubiquinol + NAD(+) + 4 H(+)(out). Core subunit of the mitochondrial membrane respiratory chain NADH dehydrogenase (Complex I) which catalyzes electron transfer from NADH through the respiratory chain, using ubiquinone as an electron acceptor. Essential for the catalytic activity and assembly of complex I. The protein is NADH-ubiquinone oxidoreductase chain 2 of Pteropus rodricensis (Rodriguez flying fox).